The sequence spans 436 residues: Histidinol dehydrogenase (436 aa).

Positions 136, 198, and 221 each coordinate NAD(+). Substrate contacts are provided by Ser-244, Gln-266, and His-269. Zn(2+) contacts are provided by Gln-266 and His-269. Residues Glu-334 and His-335 each act as proton acceptor in the active site. His-335, Asp-368, Glu-422, and His-427 together coordinate substrate. Asp-368 is a Zn(2+) binding site. Position 427 (His-427) interacts with Zn(2+).

The protein belongs to the histidinol dehydrogenase family. Zn(2+) serves as cofactor.

It catalyses the reaction L-histidinol + 2 NAD(+) + H2O = L-histidine + 2 NADH + 3 H(+). Its pathway is amino-acid biosynthesis; L-histidine biosynthesis; L-histidine from 5-phospho-alpha-D-ribose 1-diphosphate: step 9/9. Its function is as follows. Catalyzes the sequential NAD-dependent oxidations of L-histidinol to L-histidinaldehyde and then to L-histidine. This chain is Histidinol dehydrogenase, found in Dehalococcoides mccartyi (strain CBDB1).